Consider the following 166-residue polypeptide: UPF0561 protein C2orf68 (166 aa).

Positions 32–107 (NQIARDDYDK…SELEPSGHQL (76 aa)) are disordered. Composition is skewed to basic and acidic residues over residues 34–49 (IARD…AAKE) and 73–85 (RHRD…RNPD). A compositionally biased stretch (low complexity) spans 91–104 (ESSSSGGSELEPSG).

Belongs to the UPF0561 family.

This chain is UPF0561 protein C2orf68 (C2orf68), found in Homo sapiens (Human).